Reading from the N-terminus, the 221-residue chain is Small ribosomal subunit protein uS2c (221 aa).

It belongs to the universal ribosomal protein uS2 family.

The protein resides in the plastid. It localises to the chloroplast. This is Small ribosomal subunit protein uS2c (rps2) from Cyanidioschyzon merolae (strain NIES-3377 / 10D) (Unicellular red alga).